We begin with the raw amino-acid sequence, 449 residues long: UDP-N-acetylmuramoylalanine--D-glutamate ligase (449 aa).

Residue 118-124 (GTNGKTT) coordinates ATP.

It belongs to the MurCDEF family.

It localises to the cytoplasm. It carries out the reaction UDP-N-acetyl-alpha-D-muramoyl-L-alanine + D-glutamate + ATP = UDP-N-acetyl-alpha-D-muramoyl-L-alanyl-D-glutamate + ADP + phosphate + H(+). It functions in the pathway cell wall biogenesis; peptidoglycan biosynthesis. Cell wall formation. Catalyzes the addition of glutamate to the nucleotide precursor UDP-N-acetylmuramoyl-L-alanine (UMA). The polypeptide is UDP-N-acetylmuramoylalanine--D-glutamate ligase (Staphylococcus aureus (strain MRSA252)).